Consider the following 456-residue polypeptide: Choline kinase (456 aa).

The protein belongs to the choline/ethanolamine kinase family. As to quaternary structure, monomer. Mg(2+) is required as a cofactor.

The protein resides in the cytoplasm. It is found in the nucleus. The catalysed reaction is choline + ATP = phosphocholine + ADP + H(+). Its pathway is phospholipid metabolism; phosphatidylcholine biosynthesis; phosphocholine from choline: step 1/1. Catalyzes the committed step in the synthesis of phosphatidylcholine by the CDP-choline pathway. The sequence is that of Choline kinase from Schizosaccharomyces pombe (strain 972 / ATCC 24843) (Fission yeast).